The chain runs to 204 residues: MTFKGFSKKDFKTMQISGLEARMTGIQNDIQPKFRAVGEELTTYLSAKLGDEMFLHIARHQRRSVNPPDSTWLAICHDKRGYKKHPHFQVGLFDKYLFIWLAFIYENEESLKIANRFLKEKKLLADLPDNFAISPDHTEEKTYPVHDGQLEATLERFRDVKKGEFLVGKIYLPDDNHLSPAKDFIKEAEMVLDELIPLYKAALQ.

It belongs to the UPF0637 family.

The sequence is that of UPF0637 protein lmo1065 from Listeria monocytogenes serovar 1/2a (strain ATCC BAA-679 / EGD-e).